Here is a 361-residue protein sequence, read N- to C-terminus: 3-dehydroquinate synthase (361 aa).

Residues Ser72–Lys77, Thr130–Thr131, Lys142, and Lys151 contribute to the NAD(+) site. Zn(2+) is bound by residues Glu184, His247, and His264.

Belongs to the sugar phosphate cyclases superfamily. Dehydroquinate synthase family. Requires Co(2+) as cofactor. Zn(2+) serves as cofactor. The cofactor is NAD(+).

The protein localises to the cytoplasm. It catalyses the reaction 7-phospho-2-dehydro-3-deoxy-D-arabino-heptonate = 3-dehydroquinate + phosphate. The protein operates within metabolic intermediate biosynthesis; chorismate biosynthesis; chorismate from D-erythrose 4-phosphate and phosphoenolpyruvate: step 2/7. Functionally, catalyzes the conversion of 3-deoxy-D-arabino-heptulosonate 7-phosphate (DAHP) to dehydroquinate (DHQ). This Bacillus cereus (strain AH820) protein is 3-dehydroquinate synthase.